A 286-amino-acid chain; its full sequence is MKKMSRRQFLKGMFGALAAGALTAGGGYGYARYLEPHMIETTEHTIKSSLIPHGFDGFKIVQFSDAHLSDYFTLEDLKTVILTINESKPDLIVFTGDIIDNPDTYQHHQAVIPLLRKLNAPFGKLCIYGNHDHGGYGTAVYKSLMTAGGFTVYRNGYQTLSLADGSKIEIASLDDLMLGNPDYEGTLSRLSDRLFSILLVHEPDAALKTTDYPVNLQLSGHTHGGQIQLPFYGPIITPPYGKVYTEGMYQTGSTHIYVNRGLGMTRLPLRFLAKPEITVFTLKSTN.

Residues 1–31 constitute a signal peptide (tat-type signal); that stretch reads MKKMSRRQFLKGMFGALAAGALTAGGGYGYA. Residues aspartate 65, histidine 67, aspartate 97, asparagine 130, histidine 221, and histidine 223 each contribute to the a divalent metal cation site.

The protein belongs to the metallophosphoesterase superfamily. A divalent metal cation is required as a cofactor. In terms of processing, predicted to be exported by the Tat system. The position of the signal peptide cleavage has not been experimentally proven.

This is an uncharacterized protein from Bacillus subtilis (strain 168).